The chain runs to 233 residues: 2-C-methyl-D-erythritol 4-phosphate cytidylyltransferase (233 aa).

The protein belongs to the IspD/TarI cytidylyltransferase family. IspD subfamily.

It carries out the reaction 2-C-methyl-D-erythritol 4-phosphate + CTP + H(+) = 4-CDP-2-C-methyl-D-erythritol + diphosphate. It functions in the pathway isoprenoid biosynthesis; isopentenyl diphosphate biosynthesis via DXP pathway; isopentenyl diphosphate from 1-deoxy-D-xylulose 5-phosphate: step 2/6. Its function is as follows. Catalyzes the formation of 4-diphosphocytidyl-2-C-methyl-D-erythritol from CTP and 2-C-methyl-D-erythritol 4-phosphate (MEP). The protein is 2-C-methyl-D-erythritol 4-phosphate cytidylyltransferase of Gloeobacter violaceus (strain ATCC 29082 / PCC 7421).